Here is a 226-residue protein sequence, read N- to C-terminus: 2-C-methyl-D-erythritol 4-phosphate cytidylyltransferase (226 aa).

It belongs to the IspD/TarI cytidylyltransferase family. IspD subfamily.

It carries out the reaction 2-C-methyl-D-erythritol 4-phosphate + CTP + H(+) = 4-CDP-2-C-methyl-D-erythritol + diphosphate. The protein operates within isoprenoid biosynthesis; isopentenyl diphosphate biosynthesis via DXP pathway; isopentenyl diphosphate from 1-deoxy-D-xylulose 5-phosphate: step 2/6. Functionally, catalyzes the formation of 4-diphosphocytidyl-2-C-methyl-D-erythritol from CTP and 2-C-methyl-D-erythritol 4-phosphate (MEP). This chain is 2-C-methyl-D-erythritol 4-phosphate cytidylyltransferase, found in Bacillus cereus (strain ATCC 14579 / DSM 31 / CCUG 7414 / JCM 2152 / NBRC 15305 / NCIMB 9373 / NCTC 2599 / NRRL B-3711).